Consider the following 250-residue polypeptide: Adenosine 5'-phosphosulfate reductase (250 aa).

4 residues coordinate [4Fe-4S] cluster: Cys119, Cys120, Cys202, and Cys205. Cys230 (nucleophile; cysteine thiosulfonate intermediate) is an active-site residue.

It belongs to the PAPS reductase family. CysH subfamily. Requires [4Fe-4S] cluster as cofactor.

Its subcellular location is the cytoplasm. It catalyses the reaction [thioredoxin]-disulfide + sulfite + AMP + 2 H(+) = adenosine 5'-phosphosulfate + [thioredoxin]-dithiol. It functions in the pathway sulfur metabolism; hydrogen sulfide biosynthesis; sulfite from sulfate. Catalyzes the formation of sulfite from adenosine 5'-phosphosulfate (APS) using thioredoxin as an electron donor. The chain is Adenosine 5'-phosphosulfate reductase from Burkholderia cepacia (Pseudomonas cepacia).